We begin with the raw amino-acid sequence, 192 residues long: Fe/S biogenesis protein NfuA (192 aa).

Residues Cys-149 and Cys-152 each coordinate [4Fe-4S] cluster.

This sequence belongs to the NfuA family. As to quaternary structure, homodimer. It depends on [4Fe-4S] cluster as a cofactor.

Functionally, involved in iron-sulfur cluster biogenesis. Binds a 4Fe-4S cluster, can transfer this cluster to apoproteins, and thereby intervenes in the maturation of Fe/S proteins. Could also act as a scaffold/chaperone for damaged Fe/S proteins. This Shewanella amazonensis (strain ATCC BAA-1098 / SB2B) protein is Fe/S biogenesis protein NfuA.